An 833-amino-acid polypeptide reads, in one-letter code: P protein (833 aa).

At 1 to 172 (MRLENKDIRL…QVSKLGCCVR (172 aa)) the chain is on the cytoplasmic side. A helical membrane pass occupies residues 173–193 (WIKITGLFVFVVLCSILFSLY). The Extracellular portion of the chain corresponds to 194-325 (PDQGKFWQLL…QFLGASVEAQ (132 aa)). N210, N214, and N269 each carry an N-linked (GlcNAc...) asparagine glycan. Residues 326–346 (VASAVAILAGVYTLIIFEIVH) form a helical membrane-spanning segment. Residues 347–348 (RT) lie on the Cytoplasmic side of the membrane. A helical membrane pass occupies residues 349–369 (LAAMLGALAALAALAVVGDRP). Residues 370–381 (SLTHVVEWIDFE) are Extracellular-facing. The helical transmembrane segment at 382–402 (TLALLFGMMILVAVFSETGFF) threads the bilayer. The Cytoplasmic portion of the chain corresponds to 403-417 (DYCAVKAYQLSRGRV). The chain crosses the membrane as a helical span at residues 418 to 438 (WAMIFMLCLMAAILSAFLDNV). Over 439 to 501 (TTMLLFTPVT…ELRKMGLDFA (63 aa)) the chain is Extracellular. The chain crosses the membrane as a helical span at residues 502 to 522 (GFTAHMFLGICLVLLVSFPLL). Topologically, residues 523-617 (RLLYWNKKLY…RKHRISDRSL (95 aa)) are cytoplasmic. The helical transmembrane segment at 618-638 (LVKCLTVLGFVISMFFLNSFV) threads the bilayer. Residue P639 is a topological domain, extracellular. Residues 640 to 660 (GIHLDLGWIAILGAIWLLILA) traverse the membrane as a helical segment. The Cytoplasmic portion of the chain corresponds to 661 to 675 (DIHDFEIILHRVEWA). A helical membrane pass occupies residues 676 to 696 (TLLFFAALFVLMEALTHLHLV). Over 697 to 718 (EYVGEQTALLIKMVPEDQRFAA) the chain is Extracellular. The helical transmembrane segment at 719 to 739 (AIVLIVWVSALASSLIDNIPF) threads the bilayer. At 740–759 (TATMIPVLLNLSQDPEISLP) the chain is on the cytoplasmic side. The helical transmembrane segment at 760 to 780 (ALPLMYALALGACLGGNGTLI) threads the bilayer. Residues 781–810 (GASTNVVCAGIAEKHGYGFSFMEFFRLGFP) are Extracellular-facing. A helical transmembrane segment spans residues 811–831 (VMLMSCTIGMCYLLIAHIVVG). Topologically, residues 832–833 (WN) are cytoplasmic.

Belongs to the CitM (TC 2.A.11) transporter family. In terms of tissue distribution, most abundant in melanocytes. Also present in neonatal and adult eye tissue presumably as a result of expression in the retinal pigmented epithelium and choroid body, known sites of melanogenesis in the eye. Small but detectable amounts also observed in fetal, neonatal and adult brain. Moderate amounts detected in adult testis and ovary. Not detected in heart, kidney, spleen, liver or thymus.

It localises to the melanosome membrane. The enzyme catalyses chloride(in) = chloride(out). Functionally, contributes to a melanosome-specific anion (chloride) current that modulates melanosomal pH for optimal tyrosinase activity required for melanogenesis and the melanosome maturation. One of the components of the mammalian pigmentary system. May serve as a key control point at which color variation is determined. Major determinant of eye color. Seems to regulate the post-translational processing of tyrosinase, which catalyzes the limiting reaction in melanin synthesis. The sequence is that of P protein (Oca2) from Mus musculus (Mouse).